We begin with the raw amino-acid sequence, 368 residues long: Germination protease (368 aa).

A propeptide spanning residues 1–16 is cleaved from the precursor; sequence MKKSELDVNQYLIRTD.

It belongs to the peptidase A25 family. As to quaternary structure, homotetramer. In terms of processing, autoproteolytically processed. The inactive tetrameric zymogen termed p46 autoprocesses to a smaller form termed p41, which is active only during spore germination.

It catalyses the reaction Endopeptidase action with P4 Glu or Asp, P1 preferably Glu &gt; Asp, P1' hydrophobic and P2' Ala.. Initiates the degradation of small, acid-soluble proteins during spore germination. The chain is Germination protease (gpr) from Bacillus subtilis (strain 168).